A 132-amino-acid chain; its full sequence is Snaclec bothroinsularin subunit alpha (132 aa).

Disulfide bonds link cysteine 2–cysteine 13, cysteine 30–cysteine 127, and cysteine 102–cysteine 119. Positions 9-128 constitute a C-type lectin domain; sequence YGQYCYKFFQ…CGQQNPFVCK (120 aa).

The protein belongs to the snaclec family. As to quaternary structure, heterodimer of subunits alpha and beta; disulfide-linked. As to expression, expressed by the venom gland.

The protein resides in the secreted. In terms of biological role, thrombin and prothrombin (F2) inhibitor. The IC(50) of thrombin-induced platelet aggregation and fibrinocoagulation is 62 and 35 nM, respectively. Its inhibitory activity is at least 10-fold lower than that observed for other thrombin inhibitors. The chain is Snaclec bothroinsularin subunit alpha from Bothrops insularis (Golden lancehead).